The following is a 251-amino-acid chain: Uridylate kinase (251 aa).

26 to 29 (KLGG) is an ATP binding site. Position 67 (Gly67) interacts with UMP. ATP contacts are provided by Gly68 and Arg72. UMP-binding positions include Asp87 and 148–155 (MGLPYFST). The ATP site is built by Phe181 and Asp184.

This sequence belongs to the UMP kinase family. As to quaternary structure, homohexamer.

The protein resides in the cytoplasm. The enzyme catalyses UMP + ATP = UDP + ADP. The protein operates within pyrimidine metabolism; CTP biosynthesis via de novo pathway; UDP from UMP (UMPK route): step 1/1. Its activity is regulated as follows. Inhibited by UTP. In terms of biological role, catalyzes the reversible phosphorylation of UMP to UDP. In Mycolicibacterium vanbaalenii (strain DSM 7251 / JCM 13017 / BCRC 16820 / KCTC 9966 / NRRL B-24157 / PYR-1) (Mycobacterium vanbaalenii), this protein is Uridylate kinase.